Consider the following 379-residue polypeptide: Dual-specificity RNA methyltransferase RlmN (379 aa).

Glutamate 96 functions as the Proton acceptor in the catalytic mechanism. In terms of domain architecture, Radical SAM core spans 102-342 (TDDRGTLCVS…TRTTRGDDID (241 aa)). Cysteine 109 and cysteine 345 are oxidised to a cystine. [4Fe-4S] cluster is bound by residues cysteine 116, cysteine 120, and cysteine 123. Residues 170-171 (GE), serine 202, 224-226 (SLH), and asparagine 302 each bind S-adenosyl-L-methionine. Cysteine 345 functions as the S-methylcysteine intermediate in the catalytic mechanism.

It belongs to the radical SAM superfamily. RlmN family. [4Fe-4S] cluster serves as cofactor.

It is found in the cytoplasm. The catalysed reaction is adenosine(2503) in 23S rRNA + 2 reduced [2Fe-2S]-[ferredoxin] + 2 S-adenosyl-L-methionine = 2-methyladenosine(2503) in 23S rRNA + 5'-deoxyadenosine + L-methionine + 2 oxidized [2Fe-2S]-[ferredoxin] + S-adenosyl-L-homocysteine. The enzyme catalyses adenosine(37) in tRNA + 2 reduced [2Fe-2S]-[ferredoxin] + 2 S-adenosyl-L-methionine = 2-methyladenosine(37) in tRNA + 5'-deoxyadenosine + L-methionine + 2 oxidized [2Fe-2S]-[ferredoxin] + S-adenosyl-L-homocysteine. Its function is as follows. Specifically methylates position 2 of adenine 2503 in 23S rRNA and position 2 of adenine 37 in tRNAs. m2A2503 modification seems to play a crucial role in the proofreading step occurring at the peptidyl transferase center and thus would serve to optimize ribosomal fidelity. This Pseudomonas entomophila (strain L48) protein is Dual-specificity RNA methyltransferase RlmN.